The chain runs to 295 residues: Ribosomal protein L11 methyltransferase (295 aa).

Residues T150, G171, D193, and N232 each coordinate S-adenosyl-L-methionine.

Belongs to the methyltransferase superfamily. PrmA family.

It is found in the cytoplasm. The catalysed reaction is L-lysyl-[protein] + 3 S-adenosyl-L-methionine = N(6),N(6),N(6)-trimethyl-L-lysyl-[protein] + 3 S-adenosyl-L-homocysteine + 3 H(+). Its function is as follows. Methylates ribosomal protein L11. In Methylobacillus flagellatus (strain ATCC 51484 / DSM 6875 / VKM B-1610 / KT), this protein is Ribosomal protein L11 methyltransferase.